The primary structure comprises 202 residues: Probable nicotinate-nucleotide adenylyltransferase (202 aa).

This sequence belongs to the NadD family.

The catalysed reaction is nicotinate beta-D-ribonucleotide + ATP + H(+) = deamido-NAD(+) + diphosphate. It participates in cofactor biosynthesis; NAD(+) biosynthesis; deamido-NAD(+) from nicotinate D-ribonucleotide: step 1/1. Functionally, catalyzes the reversible adenylation of nicotinate mononucleotide (NaMN) to nicotinic acid adenine dinucleotide (NaAD). The protein is Probable nicotinate-nucleotide adenylyltransferase of Clostridium perfringens (strain SM101 / Type A).